The sequence spans 85 residues: Major outer membrane protein 1 (85 aa).

Residues 1-18 (MEAREVEEMRRSRLLTLG) form the signal peptide. A helical transmembrane segment spans residues 22-42 (YTAVIALAALVLVMGALGLVL).

As to quaternary structure, forms extremely stable complexes with apparent masses of 150, 50, 45 and 38 kDa. Found in a ring-shaped complex of 7 nm diameter with a 2 nm channel through the middle. Complete denaturation requires temperatures over 110 degrees Celsius.

The protein resides in the cell outer membrane. Its function is as follows. The most abundant protein of the outer membrane, it forms a pore through it. This chain is Major outer membrane protein 1 (ihomp1), found in Ignicoccus hospitalis (strain KIN4/I / DSM 18386 / JCM 14125).